Consider the following 300-residue polypeptide: Epimerase family protein SAB0724c (300 aa).

Belongs to the NAD(P)-dependent epimerase/dehydratase family. SDR39U1 subfamily.

The protein is Epimerase family protein SAB0724c of Staphylococcus aureus (strain bovine RF122 / ET3-1).